Consider the following 319-residue polypeptide: D-ribose/D-allose-binding protein (319 aa).

The N-terminal stretch at Met-1 to Ala-29 is a signal peptide.

Belongs to the bacterial solute-binding protein 2 family.

The protein localises to the periplasm. In terms of biological role, binds specifically both D-ribose and D-allose, with affinities in the lower micromolar range. This Pseudomonas aeruginosa (strain ATCC 15692 / DSM 22644 / CIP 104116 / JCM 14847 / LMG 12228 / 1C / PRS 101 / PAO1) protein is D-ribose/D-allose-binding protein.